A 159-amino-acid polypeptide reads, in one-letter code: MPTWHYSTDIAEKNPEKTAKAMMWDAPISPKEATELARVIRGMKLTEAKAYLERVIKMEEPVPYRRYHGKVAHKRGLADKHGIPMGRYPVKAAKYFLKLLKNVEANAEFKGLEVEKLKIVHIASHKGMTIKRWMPRAFGRATPEFERRTHLEVIVEEVE.

This sequence belongs to the universal ribosomal protein uL22 family. In terms of assembly, part of the 50S ribosomal subunit.

In terms of biological role, this protein binds specifically to 23S rRNA. It makes multiple contacts with different domains of the 23S rRNA in the assembled 50S subunit and ribosome. Its function is as follows. The globular domain of the protein is located near the polypeptide exit tunnel on the outside of the subunit, while an extended beta-hairpin is found that lines the wall of the exit tunnel in the center of the 70S ribosome. This Ignicoccus hospitalis (strain KIN4/I / DSM 18386 / JCM 14125) protein is Large ribosomal subunit protein uL22.